We begin with the raw amino-acid sequence, 641 residues long: 1-deoxy-D-xylulose-5-phosphate synthase (641 aa).

Thiamine diphosphate is bound by residues His79 and 120-122; that span reads GHS. Asp151 contacts Mg(2+). Residues 152–153, Asn180, Tyr291, and Glu375 each bind thiamine diphosphate; that span reads GS. Mg(2+) is bound at residue Asn180.

This sequence belongs to the transketolase family. DXPS subfamily. As to quaternary structure, homodimer. Mg(2+) is required as a cofactor. Thiamine diphosphate serves as cofactor.

The catalysed reaction is D-glyceraldehyde 3-phosphate + pyruvate + H(+) = 1-deoxy-D-xylulose 5-phosphate + CO2. The protein operates within metabolic intermediate biosynthesis; 1-deoxy-D-xylulose 5-phosphate biosynthesis; 1-deoxy-D-xylulose 5-phosphate from D-glyceraldehyde 3-phosphate and pyruvate: step 1/1. Functionally, catalyzes the acyloin condensation reaction between C atoms 2 and 3 of pyruvate and glyceraldehyde 3-phosphate to yield 1-deoxy-D-xylulose-5-phosphate (DXP). The protein is 1-deoxy-D-xylulose-5-phosphate synthase of Nitratidesulfovibrio vulgaris (strain ATCC 29579 / DSM 644 / CCUG 34227 / NCIMB 8303 / VKM B-1760 / Hildenborough) (Desulfovibrio vulgaris).